The chain runs to 78 residues: Cytochrome c oxidase subunit 6b-2 (78 aa).

Positions Thr-22 to Trp-65 constitute a CHCH domain. Residues Cys-25–Cys-35 carry the Cx9C motif motif. Disulfide bonds link Cys-25–Cys-57 and Cys-35–Cys-46. The short motif at Cys-46–Cys-57 is the Cx10C motif element.

The protein belongs to the cytochrome c oxidase subunit 6B (TC 3.D.4.8) family. Specifically expressed in roots.

The protein localises to the mitochondrion. This protein is one of the nuclear-coded polypeptide chains of cytochrome c oxidase, the terminal oxidase in mitochondrial electron transport. This protein may be one of the heme-binding subunits of the oxidase. In Arabidopsis thaliana (Mouse-ear cress), this protein is Cytochrome c oxidase subunit 6b-2 (COX6B-2).